Consider the following 83-residue polypeptide: Large ribosomal subunit protein bL27 (83 aa).

This sequence belongs to the bacterial ribosomal protein bL27 family.

This Thermotoga neapolitana (strain ATCC 49049 / DSM 4359 / NBRC 107923 / NS-E) protein is Large ribosomal subunit protein bL27.